Here is a 298-residue protein sequence, read N- to C-terminus: Acetylglutamate kinase (298 aa).

Residues 69 to 70, R91, and N191 contribute to the substrate site; that span reads GG.

Belongs to the acetylglutamate kinase family. ArgB subfamily.

Its subcellular location is the cytoplasm. It carries out the reaction N-acetyl-L-glutamate + ATP = N-acetyl-L-glutamyl 5-phosphate + ADP. It participates in amino-acid biosynthesis; L-arginine biosynthesis; N(2)-acetyl-L-ornithine from L-glutamate: step 2/4. In terms of biological role, catalyzes the ATP-dependent phosphorylation of N-acetyl-L-glutamate. In Neisseria gonorrhoeae (strain ATCC 700825 / FA 1090), this protein is Acetylglutamate kinase.